A 905-amino-acid polypeptide reads, in one-letter code: Protein translocase subunit SecA (905 aa).

ATP is bound by residues glutamine 89, 107-111, and aspartate 502; that span reads GEGKT. Residues cysteine 887, cysteine 889, cysteine 898, and histidine 899 each coordinate Zn(2+).

It belongs to the SecA family. As to quaternary structure, monomer and homodimer. Part of the essential Sec protein translocation apparatus which comprises SecA, SecYEG and auxiliary proteins SecDF-YajC and YidC. It depends on Zn(2+) as a cofactor.

It localises to the cell inner membrane. The protein localises to the cytoplasm. It catalyses the reaction ATP + H2O + cellular proteinSide 1 = ADP + phosphate + cellular proteinSide 2.. In terms of biological role, part of the Sec protein translocase complex. Interacts with the SecYEG preprotein conducting channel. Has a central role in coupling the hydrolysis of ATP to the transfer of proteins into and across the cell membrane, serving both as a receptor for the preprotein-SecB complex and as an ATP-driven molecular motor driving the stepwise translocation of polypeptide chains across the membrane. The polypeptide is Protein translocase subunit SecA (Rhizobium leguminosarum bv. trifolii (strain WSM2304)).